The sequence spans 363 residues: Mitogen-activated protein kinase kinase 2 (363 aa).

A Phosphoserine modification is found at Ser-56. The 261-residue stretch at Leu-70–Leu-330 folds into the Protein kinase domain. ATP-binding positions include Ile-76–Val-84 and Lys-99. Asp-192 acts as the Proton acceptor in catalysis. 3 positions are modified to phosphothreonine: Thr-220, Thr-226, and Thr-230.

The protein belongs to the protein kinase superfamily. STE Ser/Thr protein kinase family. MAP kinase kinase subfamily. As to quaternary structure, interacts with MEKK1, MPK4 and MPK6. May form a ternary complex composed of MEKK1 and MKK1/MKK2 and MPK4. Interacts with MPK10 and MPK11. Interacts with MAPKKK5 mainly in the cytosol. In terms of processing, phosphorylation at Thr-220 and Thr-226 by MAP kinase kinase kinases positively regulates kinase activity. Phosphorylated by MEKK1 in response to cold. Phosphorylated by MAPKKK5.

It catalyses the reaction L-seryl-[protein] + ATP = O-phospho-L-seryl-[protein] + ADP + H(+). The catalysed reaction is L-threonyl-[protein] + ATP = O-phospho-L-threonyl-[protein] + ADP + H(+). It carries out the reaction L-tyrosyl-[protein] + ATP = O-phospho-L-tyrosyl-[protein] + ADP + H(+). With respect to regulation, activated in response to cold and salt stresses through serine and threonine phosphorylation by MEKK1. MEKK1, MKK1/MKK2 and MPK4 function in a signaling pathway that modulates the expression of genes responding to biotic and abiotic stresses and also plays an important role in pathogen defense by negatively regulating innate immunity. Plays a role in abiotic stress tolerance and plant disease resistance through activation of MPK4 and MPK6 by phosphorylation. Acts redundantly with MKK1. The protein is Mitogen-activated protein kinase kinase 2 (MKK2) of Arabidopsis thaliana (Mouse-ear cress).